Consider the following 93-residue polypeptide: Large ribosomal subunit protein bL27 (93 aa).

Residues 1 to 10 constitute a propeptide that is removed on maturation; it reads MLLKLQIQLF.

This sequence belongs to the bacterial ribosomal protein bL27 family. Post-translationally, the N-terminus is cleaved by ribosomal processing cysteine protease Prp.

This Phytoplasma australiense protein is Large ribosomal subunit protein bL27.